A 23-amino-acid polypeptide reads, in one-letter code: Phospholipase A2 homolog 4 (23 aa).

The protein belongs to the phospholipase A2 family. Group II subfamily. K49 sub-subfamily. Homodimer; non-covalently linked (probable alternative/compact dimer conformation in solution). Expressed by the venom gland.

The protein resides in the secreted. Its function is as follows. Snake venom phospholipase A2 homolog that lacks enzymatic activity. Induces acute muscle damage after intramuscular injection in mice and disrupts negatively charged liposomes but not positively charged ones. Also exerts a weak anticoagulant effect only at concentrations of 40 ug/ml or higher. A model of myotoxic mechanism has been proposed: an apo Lys49-PLA2 is activated by the entrance of a hydrophobic molecule (e.g. fatty acid) at the hydrophobic channel of the protein leading to a reorientation of a monomer. This reorientation causes a transition between 'inactive' to 'active' states, causing alignment of C-terminal and membrane-docking sites (MDoS) side-by-side and putting the membrane-disruption sites (MDiS) in the same plane, exposed to solvent and in a symmetric position for both monomers. The MDoS region stabilizes the toxin on membrane by the interaction of charged residues with phospholipid head groups. Subsequently, the MDiS region destabilizes the membrane with penetration of hydrophobic residues. This insertion causes a disorganization of the membrane, allowing an uncontrolled influx of ions (i.e. calcium and sodium), and eventually triggering irreversible intracellular alterations and cell death. The polypeptide is Phospholipase A2 homolog 4 (Bothrops asper (Terciopelo)).